The chain runs to 426 residues: MQKNITNVSEIAQELEIILTAEEYQPEYDQQLEEARKSVRIKGFRQGHVPVGMLKRIIGPSIEAEVAEKMASKYFAAIAEEEKINPASRAQIESYNYEDGKLTIKISYEIHPEFELKDFSEYTFTQAEYTISDEDVDREIKLILRGHGTMVTSEDAAAEGDTVIGDVTKLDADGADIEGSKNENHHFNLEYLPADNPFRMALEGKKAGDVVDVTVKPKEEGGETNRFRIEIKEVKHLELPELDDELVKEISQQRFEKVEDFRNDIRLQLQAHFSDKSEYDLLEAISSKLIEEHPVPTPSAMVAHFQNILLENAKRQVGGQFPKGFDEREFFNAMKPNAEKHARWLLISQKIAKENNLEVTDEDIKAFAEKEAEKEPSLTVDQLLNTYLSTEFKDYIIDTILKEKIYDVIKSKVTITKEATPVPAHN.

Residues 160 to 240 enclose the PPIase FKBP-type domain; that stretch reads GDTVIGDVTK…IKEVKHLELP (81 aa).

The protein belongs to the FKBP-type PPIase family. Tig subfamily.

The protein localises to the cytoplasm. It catalyses the reaction [protein]-peptidylproline (omega=180) = [protein]-peptidylproline (omega=0). Its function is as follows. Involved in protein export. Acts as a chaperone by maintaining the newly synthesized protein in an open conformation. Functions as a peptidyl-prolyl cis-trans isomerase. This chain is Trigger factor, found in Chlorobaculum tepidum (strain ATCC 49652 / DSM 12025 / NBRC 103806 / TLS) (Chlorobium tepidum).